The chain runs to 211 residues: Large ribosomal subunit protein uL4 (211 aa).

Residues 42 to 73 (NNRQGTHSTKDRSEVRGGGIKPWAQKGTGRAR) form a disordered region.

Belongs to the universal ribosomal protein uL4 family. As to quaternary structure, part of the 50S ribosomal subunit.

In terms of biological role, one of the primary rRNA binding proteins, this protein initially binds near the 5'-end of the 23S rRNA. It is important during the early stages of 50S assembly. It makes multiple contacts with different domains of the 23S rRNA in the assembled 50S subunit and ribosome. Functionally, forms part of the polypeptide exit tunnel. This chain is Large ribosomal subunit protein uL4, found in Leptospira biflexa serovar Patoc (strain Patoc 1 / Ames).